A 374-amino-acid chain; its full sequence is Putative F-box protein At5g60060 (374 aa).

The 53-residue stretch at 9 to 61 (SQWSDLPLDILELISDRLDHDSSDTIHLLCLRSVCATWRLSLPLSNKNNRLSK) folds into the F-box domain.

The polypeptide is Putative F-box protein At5g60060 (Arabidopsis thaliana (Mouse-ear cress)).